A 702-amino-acid chain; its full sequence is Elongation factor G (702 aa).

Positions threonine 8–threonine 290 constitute a tr-type G domain. Residues alanine 17–threonine 24, aspartate 88–histidine 92, and asparagine 142–aspartate 145 contribute to the GTP site.

It belongs to the TRAFAC class translation factor GTPase superfamily. Classic translation factor GTPase family. EF-G/EF-2 subfamily.

Its subcellular location is the cytoplasm. Its function is as follows. Catalyzes the GTP-dependent ribosomal translocation step during translation elongation. During this step, the ribosome changes from the pre-translocational (PRE) to the post-translocational (POST) state as the newly formed A-site-bound peptidyl-tRNA and P-site-bound deacylated tRNA move to the P and E sites, respectively. Catalyzes the coordinated movement of the two tRNA molecules, the mRNA and conformational changes in the ribosome. This Erwinia tasmaniensis (strain DSM 17950 / CFBP 7177 / CIP 109463 / NCPPB 4357 / Et1/99) protein is Elongation factor G.